The sequence spans 295 residues: Pyridoxal 5'-phosphate synthase subunit PdxS (295 aa).

Asp-25 contributes to the D-ribose 5-phosphate binding site. Lys-82 acts as the Schiff-base intermediate with D-ribose 5-phosphate in catalysis. Gly-154 contributes to the D-ribose 5-phosphate binding site. Arg-166 provides a ligand contact to D-glyceraldehyde 3-phosphate. Residues Gly-215 and 236–237 (GS) each bind D-ribose 5-phosphate.

It belongs to the PdxS/SNZ family. In the presence of PdxT, forms a dodecamer of heterodimers.

It carries out the reaction aldehydo-D-ribose 5-phosphate + D-glyceraldehyde 3-phosphate + L-glutamine = pyridoxal 5'-phosphate + L-glutamate + phosphate + 3 H2O + H(+). It functions in the pathway cofactor biosynthesis; pyridoxal 5'-phosphate biosynthesis. Catalyzes the formation of pyridoxal 5'-phosphate from ribose 5-phosphate (RBP), glyceraldehyde 3-phosphate (G3P) and ammonia. The ammonia is provided by the PdxT subunit. Can also use ribulose 5-phosphate and dihydroxyacetone phosphate as substrates, resulting from enzyme-catalyzed isomerization of RBP and G3P, respectively. This chain is Pyridoxal 5'-phosphate synthase subunit PdxS, found in Bacillus cereus (strain Q1).